The primary structure comprises 192 residues: Cytochrome c oxidase assembly protein CtaG (192 aa).

At 1-9 (MSLSPHQKT) the chain is on the cytoplasmic side. The helical; Signal-anchor for type II membrane protein transmembrane segment at 10–30 (AGWLVGVVVVMGAASFAAVPF) threads the bilayer. Residues 31–192 (YDWFCRVTGF…AARPAGIDVN (162 aa)) lie on the Periplasmic side of the membrane.

The protein belongs to the COX11/CtaG family.

It localises to the cell inner membrane. Functionally, exerts its effect at some terminal stage of cytochrome c oxidase synthesis, probably by being involved in the insertion of the copper B into subunit I. This Cereibacter sphaeroides (strain ATCC 17025 / ATH 2.4.3) (Rhodobacter sphaeroides) protein is Cytochrome c oxidase assembly protein CtaG.